The chain runs to 175 residues: Replication restart protein PriC (175 aa).

The protein belongs to the PriC family. As to quaternary structure, monomer. Oligomerizes in the absence of DNA. Component of the replication restart primosome, which is composed of PriA, PriB, PriC, DnaB and DnaT; DnaG primase associates transiently with this complex. Interacts with the C-terminus of SSB; this interaction is required for DnaB loading onto substrate replication forks. Interacts with DnaB alone and in the DnaB-DnaC complex, probably 1:1 binding with DnaB.

In terms of biological role, involved in the restart of stalled replication forks, which reloads the replicative helicase (DnaB) on sites other than the origin of replication. Recognizes abandoned replication forks and remodels DNA single-stranded binding protein (SSB) on ssDNA to uncover a loading site for DnaB. There are several restart pathways, the PriA-PriC pathway is a minor restart pathway. Also part of the minor PriC-Rep pathway for restart of stalled replication forks, which has a different substrate specificity than PriA. priB and priC have redundant roles in the cell. Stimulates the 3'-5' helicase activity of Rep helicase in vitro. In vitro can load the DnaB replicative helicase from a DnaB-DnaC complex on an SSB-coated stalled replication fork with no leading- or lagging-strand (or with a gap between the leading strand and fork junction) in the absence of other primosome proteins (PriA, PriB or DnaT). Also part of the major restart pathway with PriA, PriB, DnaB, DnaT and DnaG primase. PriC may contribute to the stability of the preprimosome complex. Preferentially binds approximately 7-9 nucleotides of single-stranded (ss)DNA, also binds double-stranded (ds)DNA. PriB is probably more important in the cell than PriC. This is Replication restart protein PriC from Escherichia coli (strain K12).